Reading from the N-terminus, the 288-residue chain is CBY1-interacting BAR domain-containing protein 2 (288 aa).

The tract at residues 6 to 217 (SRDSQVRVME…ESYDLEKDLE (212 aa)) is BAR-like. Disordered stretches follow at residues 133 to 157 (QKSP…VDAS) and 256 to 288 (TIRS…RLNQ). A compositionally biased stretch (polar residues) spans 138-157 (DRQTISQAETSVQRASVDAS). A compositionally biased stretch (acidic residues) spans 266-276 (SEDDSAEEDPV).

Belongs to the CIBAR family. In terms of assembly, homodimer (via BAR-like domain). Heterodimer (via BAR-like domain) with FAM92A. Interacts with CBY1.

The protein resides in the cytoplasm. It is found in the cytoskeleton. Its subcellular location is the microtubule organizing center. The protein localises to the centrosome. It localises to the centriole. The protein resides in the cilium basal body. May play a role in ciliogenesis. In cooperation with CBY1 may facilitate ciliogenesis likely by the recruitment and fusion of endosomal vesicles at distal appendages during early stages of ciliogenesis. The chain is CBY1-interacting BAR domain-containing protein 2 (CIBAR2) from Bos taurus (Bovine).